We begin with the raw amino-acid sequence, 336 residues long: MNVLGIESTAHTFGVGIVSDDDSEIRILSNERDTFVPKQGGMKPSDLGRHHSEVAPEVLQKALIKANLSIRDINYIAVSLGPGIGPALRVGATIARALSLKYDIKLVPVNHGIAHIEIGRFTTRSKDPLILYLSGGNTIITTYLDGKYRIFGETLDIALGNMLDTFVREVGLAPPYIVNGVHQIDLCANKGGNFIELPYIVKGQDMSYSGLLTAALRATKNNRLEDVCYSVREVAFDMLLEATERALALTGKKEILVVGGVAASVSLKTKLYNLAKDWNVEVKIVPPEYSGDNGAMIAFTGLLEARHGVTIPVEKSIIRPRWRVDQVDVTWRLSEN.

His-111, His-115, and Tyr-132 together coordinate Fe cation. Substrate-binding positions include Tyr-132–Gly-136, Asp-164, Asp-185, and Ser-264. A Fe cation-binding site is contributed by Asp-292.

This sequence belongs to the KAE1 / TsaD family. Requires Fe(2+) as cofactor.

It localises to the cytoplasm. The catalysed reaction is L-threonylcarbamoyladenylate + adenosine(37) in tRNA = N(6)-L-threonylcarbamoyladenosine(37) in tRNA + AMP + H(+). Required for the formation of a threonylcarbamoyl group on adenosine at position 37 (t(6)A37) in tRNAs that read codons beginning with adenine. Is probably involved in the transfer of the threonylcarbamoyl moiety of threonylcarbamoyl-AMP (TC-AMP) to the N6 group of A37. This chain is tRNA N6-adenosine threonylcarbamoyltransferase, found in Sulfurisphaera tokodaii (strain DSM 16993 / JCM 10545 / NBRC 100140 / 7) (Sulfolobus tokodaii).